Reading from the N-terminus, the 304-residue chain is Bacteriochlorophyll synthase 33 kDa chain (304 aa).

9 helical membrane passes run 26-46 (VTWFPPMWAYLCGAVSSNVPI), 51-71 (GVVVLGIVLAGPIVCGMSQAA), 94-114 (IPGLWGLYIAIAMSLLSLVVG), 117-137 (LGSWGFVATLLGVAAAWAYSV), 151-171 (GLVGLAYEGLPWITGAAVLLA), 178-198 (GFPIVMMATLYALGAHGIMTI), 227-247 (IACTVMGLAQALVITMLYLFS), 250-270 (YHATAVLVLLCGQFWAMSVWM), and 279-299 (WYNGTGVVMYVSGMMITAFAI).

It is found in the cell membrane. Its pathway is porphyrin-containing compound metabolism; bacteriochlorophyll biosynthesis (light-independent). Functionally, catalyzes the esterification of bacteriochlorophyllide a by geranylgeraniol-PPi. This is Bacteriochlorophyll synthase 33 kDa chain (bchG) from Rhodobacter capsulatus (strain ATCC BAA-309 / NBRC 16581 / SB1003).